The chain runs to 90 residues: Accessory gland-specific peptide 26Ab (90 aa).

A signal peptide spans 1–21 (MNYFAVICIFSCICLWQFSDA).

As to expression, main cells and secondary cells of the accessory glands of 1 day old virgin males (at protein level). In 5 day old virgin males, only detected in the secondary cells (at protein level). Reappears in the main cells after mating (at protein level). First detected in adult males 3-4 hr after eclosion, levels increase reaching a peak at day 3-5 which is maintained until at least day 10 of adulthood (at protein level). In unmated male adults, levels are maintained for the first 6 days of adulthood and then gradually decrease for at least the next 8 days. No expression in females.

Its subcellular location is the secreted. It is found in the extracellular space. It localises to the cytoplasm. This protein is transferred from male to female during mating and may affect egglaying and behavior after mating. This chain is Accessory gland-specific peptide 26Ab, found in Drosophila melanogaster (Fruit fly).